The primary structure comprises 1491 residues: Membrane-associated guanylate kinase, WW and PDZ domain-containing protein 1 (1491 aa).

A PDZ 1 domain is found at 17–105; the sequence is ECTVKRGPQG…AVTFKAVRQG (89 aa). The Guanylate kinase-like domain occupies 96 to 287; that stretch reads AVTFKAVRQG…APITDPSQKF (192 aa). An ATP-binding site is contributed by 103–110; it reads RQGGRLNK. The interval 236 to 267 is disordered; it reads AENEEEDDVPEMNSSFTADSGEQEEHTLQETA. Residues 300-333 enclose the WW 1 domain; the sequence is GPLPENWEMAYTENGEVYFIDHNTKTTSWLDPRC. The residue at position 357 (Ser357) is a Phosphoserine. A WW 2 domain is found at 359–392; it reads LELPAGWEKIEDPVYGIYYVDHINRKTQYENPVL. The segment covering 411–421 has biased composition (low complexity); the sequence is QQQQQQQQQQQ. A disordered region spans residues 411-462; it reads QQQQQQQQQQQTEEWTEDHSALVPPVIPNHPPSNPEPAREVPLQGKPFFTRN. Pro residues predominate over residues 435-445; the sequence is PVIPNHPPSNP. Positions 472–554 constitute a PDZ 2 domain; it reads HTKLRKSSRG…GASVDLELCR (83 aa). Over residues 586 to 600 the composition is skewed to polar residues; sequence QETYDSPASHSSKTG. Disordered regions lie at residues 586–623, 720–832, and 932–987; these read QETY…SSHG, QRGG…FGEC, and TENE…GGGS. The PDZ 3 domain maps to 643–721; that stretch reads TVHIVKGPMG…GSEVTLLVQR (79 aa). 2 positions are modified to phosphoserine: Ser730 and Ser741. Residues 742-752 show a composition bias toward low complexity; that stretch reads QNSSQHSVSSH. The segment covering 756-766 has biased composition (polar residues); it reads HTASPSHSTQV. A Phosphoserine modification is found at Ser800. The 83-residue stretch at 813–895 folds into the PDZ 4 domain; it reads SGLSKGERER…DELICVDGTP (83 aa). A compositionally biased stretch (polar residues) spans 939–951; sequence PASSHHSSNQPAS. The region spanning 970 to 1066 is the PDZ 5 domain; it reads SSGSGSTSGI…DRILAVNGCS (97 aa). Residues 970 to 1066 are interaction with FCHSD2; sequence SSGSGSTSGI…DRILAVNGCS (97 aa). Positions 975–987 are enriched in gly residues; sequence STSGIGSGGGGGS. The residue at position 1071 (Ser1071) is a Phosphoserine. The segment covering 1112–1130 has biased composition (polar residues); the sequence is TTTHTPSQQGTQETRNTTK. Disordered stretches follow at residues 1112–1143 and 1234–1491; these read TTTH…KAPQ and DGSV…DLSI. Residues 1124-1206 enclose the PDZ 6 domain; sequence ETRNTTKPKQ…DEILEINGET (83 aa). Basic and acidic residues-rich tracts occupy residues 1278–1338, 1354–1396, and 1403–1491; these read DLHK…DAQA, KRRE…DGSP, and LERL…DLSI. Phosphoserine occurs at positions 1361 and 1412.

In terms of assembly, part of a complex composed of AMOTL2, MAGI1 and CDH5, within the complex AMOTL2 acts as a scaffold protein for the interaction of MAGI1 with CDH5. The complex is required for coupling actin fibers to cell junctions in endothelial cells. Interacts through its WW 2 domain with SYNPO and through its PDZ 5 domain with ACTN4. Interacts with cytoplasmic domain of ADGRB1. Interacts via its WW domains with DRPLA. Interacts with ESAM, LRP2 and CXADR. May interact with CTNNB1. Interacts through its PDZ 1 domain with NET1. Interacts with ASIC3 and AMOT. Interacts with FCHSD2. Interacts with IGSF5/JAM4 and through its PDZ 2 and 3 domains with NPHS1 forming a tripartite complex. Interacts with DDN. Interacts with DLL1. Interacts with KCNJ10 and possibly with KCNJ10/KCNJ16 heterodimer; this interaction may facilitate KCNJ10/KCNJ16 potassium channel expression at the basolateral membrane in kidney tubular cells. Interacts with PRRG4 (via cytoplasmic domain). Interacts (via PDZ domain) with RAPGEF2. In terms of tissue distribution, widely expressed with the exception of skeletal muscle. Isoform 1, isoform 2 and isoform 6 are highly expressed in colon, kidney, lung, liver, and pancreas. Isoform 5 is predominantly expressed in brain and heart. Isoform 3 and isoform 4 are highly expressed in pancreas and brain.

Its subcellular location is the cell junction. The protein resides in the tight junction. The protein localises to the cell membrane. In terms of biological role, plays a role in coupling actin fibers to cell junctions in endothelial cells, via its interaction with AMOTL2 and CDH5. May regulate acid-induced ASIC3 currents by modulating its expression at the cell surface. This is Membrane-associated guanylate kinase, WW and PDZ domain-containing protein 1 (MAGI1) from Homo sapiens (Human).